Consider the following 360-residue polypeptide: 3-isopropylmalate dehydrogenase (360 aa).

Position 76–89 (76–89) interacts with NAD(+); the sequence is GPKWDTIERDIRPE. Positions 96, 106, 134, and 224 each coordinate substrate. Positions 224, 248, and 252 each coordinate Mg(2+). 282 to 294 contacts NAD(+); that stretch reads GSAPDIAGKGIAN.

It belongs to the isocitrate and isopropylmalate dehydrogenases family. LeuB type 1 subfamily. In terms of assembly, homodimer. Mg(2+) is required as a cofactor. Mn(2+) serves as cofactor.

It is found in the cytoplasm. The catalysed reaction is (2R,3S)-3-isopropylmalate + NAD(+) = 4-methyl-2-oxopentanoate + CO2 + NADH. The protein operates within amino-acid biosynthesis; L-leucine biosynthesis; L-leucine from 3-methyl-2-oxobutanoate: step 3/4. Its function is as follows. Catalyzes the oxidation of 3-carboxy-2-hydroxy-4-methylpentanoate (3-isopropylmalate) to 3-carboxy-4-methyl-2-oxopentanoate. The product decarboxylates to 4-methyl-2 oxopentanoate. This Pseudomonas syringae pv. syringae (strain B728a) protein is 3-isopropylmalate dehydrogenase.